The following is a 201-amino-acid chain: UPF0098 protein MT1961 (201 aa).

A disordered region spans residues 125–146 (TADGETPGGGISLPNSSGQPAY).

It belongs to the UPF0098 family.

This Mycobacterium tuberculosis (strain CDC 1551 / Oshkosh) protein is UPF0098 protein MT1961.